The sequence spans 299 residues: GTPase Era (299 aa).

One can recognise an Era-type G domain in the interval 2–170 (KTGFVALAGK…LDLIIENLPE (169 aa)). The interval 10–17 (GKPNVGKS) is G1. Residue 10–17 (GKPNVGKS) participates in GTP binding. The interval 36–40 (QTTRN) is G2. The segment at 57–60 (DTPG) is G3. GTP contacts are provided by residues 57 to 61 (DTPGI) and 119 to 122 (NKID). The segment at 119 to 122 (NKID) is G4. The G5 stretch occupies residues 149–151 (TSA). One can recognise a KH type-2 domain in the interval 201 to 278 (TYEEIPHSVA…FLDLHVKVKR (78 aa)).

This sequence belongs to the TRAFAC class TrmE-Era-EngA-EngB-Septin-like GTPase superfamily. Era GTPase family. Monomer.

Its subcellular location is the cytoplasm. The protein localises to the cell inner membrane. Functionally, an essential GTPase that binds both GDP and GTP, with rapid nucleotide exchange. Plays a role in 16S rRNA processing and 30S ribosomal subunit biogenesis and possibly also in cell cycle regulation and energy metabolism. The protein is GTPase Era of Thermosipho melanesiensis (strain DSM 12029 / CIP 104789 / BI429).